The primary structure comprises 238 residues: Small ribosomal subunit protein uS3 (238 aa).

The 70-residue stretch at 39–108 (IRKFVKKKLF…NVAVNVIEVK (70 aa)) folds into the KH type-2 domain.

The protein belongs to the universal ribosomal protein uS3 family. Part of the 30S ribosomal subunit. Forms a tight complex with proteins S10 and S14.

Functionally, binds the lower part of the 30S subunit head. Binds mRNA in the 70S ribosome, positioning it for translation. This Alkaliphilus oremlandii (strain OhILAs) (Clostridium oremlandii (strain OhILAs)) protein is Small ribosomal subunit protein uS3.